A 361-amino-acid polypeptide reads, in one-letter code: Chorismate synthase (361 aa).

Residues R48 and R54 each coordinate NADP(+). FMN-binding positions include 125–127, 238–239, G278, 293–297, and R319; these read RSS, NA, and KPTSS.

The protein belongs to the chorismate synthase family. In terms of assembly, homotetramer. FMNH2 is required as a cofactor.

It catalyses the reaction 5-O-(1-carboxyvinyl)-3-phosphoshikimate = chorismate + phosphate. It functions in the pathway metabolic intermediate biosynthesis; chorismate biosynthesis; chorismate from D-erythrose 4-phosphate and phosphoenolpyruvate: step 7/7. Catalyzes the anti-1,4-elimination of the C-3 phosphate and the C-6 proR hydrogen from 5-enolpyruvylshikimate-3-phosphate (EPSP) to yield chorismate, which is the branch point compound that serves as the starting substrate for the three terminal pathways of aromatic amino acid biosynthesis. This reaction introduces a second double bond into the aromatic ring system. The chain is Chorismate synthase from Methylobacillus flagellatus (strain ATCC 51484 / DSM 6875 / VKM B-1610 / KT).